A 1246-amino-acid chain; its full sequence is Respiratory nitrate reductase 2 alpha chain (1246 aa).

A 4Fe-4S Mo/W bis-MGD-type domain is found at 43–107 (DKIVRSTHGV…SYSWYLYSAN (65 aa)). Positions 50, 54, 58, and 93 each coordinate [4Fe-4S] cluster. Aspartate 223 is a Mo-bis(molybdopterin guanine dinucleotide) binding site.

This sequence belongs to the prokaryotic molybdopterin-containing oxidoreductase family. In terms of assembly, tetramer composed of an alpha, a beta and 2 gamma chains. Alpha and beta are catalytic chains; gamma chain is involved in binding the enzyme complex to the cytoplasmic membrane. It depends on [4Fe-4S] cluster as a cofactor. Mo-bis(molybdopterin guanine dinucleotide) serves as cofactor.

It localises to the cell membrane. It carries out the reaction nitrate + a quinol = a quinone + nitrite + H2O. Its function is as follows. This is a second nitrate reductase enzyme which can substitute for the NRA enzyme and allows E.coli to use nitrate as an electron acceptor during anaerobic growth. The alpha chain is the actual site of nitrate reduction. The polypeptide is Respiratory nitrate reductase 2 alpha chain (narZ) (Escherichia coli (strain K12)).